The sequence spans 574 residues: Proline--tRNA ligase (574 aa).

It belongs to the class-II aminoacyl-tRNA synthetase family. ProS type 1 subfamily. In terms of assembly, homodimer.

The protein localises to the cytoplasm. It carries out the reaction tRNA(Pro) + L-proline + ATP = L-prolyl-tRNA(Pro) + AMP + diphosphate. Functionally, catalyzes the attachment of proline to tRNA(Pro) in a two-step reaction: proline is first activated by ATP to form Pro-AMP and then transferred to the acceptor end of tRNA(Pro). As ProRS can inadvertently accommodate and process non-cognate amino acids such as alanine and cysteine, to avoid such errors it has two additional distinct editing activities against alanine. One activity is designated as 'pretransfer' editing and involves the tRNA(Pro)-independent hydrolysis of activated Ala-AMP. The other activity is designated 'posttransfer' editing and involves deacylation of mischarged Ala-tRNA(Pro). The misacylated Cys-tRNA(Pro) is not edited by ProRS. This Anaeromyxobacter sp. (strain K) protein is Proline--tRNA ligase.